The chain runs to 491 residues: 2,3-bisphosphoglycerate-independent phosphoglycerate mutase (491 aa).

Mn(2+) is bound by residues Asp-11 and Ser-61. Ser-61 (phosphoserine intermediate) is an active-site residue. Residues His-118, 147–148, Arg-177, Arg-183, 248–251, and Lys-320 contribute to the substrate site; these read RD and RSDR. Residues Asp-386, His-390, Asp-427, His-428, and His-445 each contribute to the Mn(2+) site.

Belongs to the BPG-independent phosphoglycerate mutase family. In terms of assembly, monomer. The cofactor is Mn(2+).

It carries out the reaction (2R)-2-phosphoglycerate = (2R)-3-phosphoglycerate. The protein operates within carbohydrate degradation; glycolysis; pyruvate from D-glyceraldehyde 3-phosphate: step 3/5. In terms of biological role, catalyzes the interconversion of 2-phosphoglycerate and 3-phosphoglycerate. The sequence is that of 2,3-bisphosphoglycerate-independent phosphoglycerate mutase from Aliarcobacter butzleri (strain RM4018) (Arcobacter butzleri).